The following is a 146-amino-acid chain: Small ribosomal subunit protein bS6 (146 aa).

Positions 100 to 146 are disordered; that stretch reads QSAMMRKRDDDDRGDRPDRGDRGRGPRPDRPPRRPRDDAAASDEGGF. Positions 105–138 are enriched in basic and acidic residues; the sequence is RKRDDDDRGDRPDRGDRGRGPRPDRPPRRPRDDA.

The protein belongs to the bacterial ribosomal protein bS6 family.

Binds together with bS18 to 16S ribosomal RNA. In Methylocella silvestris (strain DSM 15510 / CIP 108128 / LMG 27833 / NCIMB 13906 / BL2), this protein is Small ribosomal subunit protein bS6.